The following is a 150-amino-acid chain: MGIQHEFDIIINGDIALRNLQLHRGDNYGCKLKIISNDYKKLKFRFIIRPDWSEIDEVKGLTVFANNYAVKVNKVDDTFYYVIYEAVIHLYNKKTEILIYSDDENELFKHYYPYISLNMISKKYKVKEENYSSPYIEHPLIPYRDYESMD.

Belongs to the orthopoxvirus OPG027 family.

In terms of biological role, inhibits antiviral activity induced by type I interferons. Does not block signal transduction of IFN, but is important to counteract the host antiviral state induced by a pre-treatment with IFN. In Homo sapiens (Human), this protein is Interferon antagonist OPG027 (OPG027).